A 160-amino-acid chain; its full sequence is Transcription elongation factor GreA (160 aa).

Belongs to the GreA/GreB family.

Necessary for efficient RNA polymerase transcription elongation past template-encoded arresting sites. The arresting sites in DNA have the property of trapping a certain fraction of elongating RNA polymerases that pass through, resulting in locked ternary complexes. Cleavage of the nascent transcript by cleavage factors such as GreA or GreB allows the resumption of elongation from the new 3'terminus. GreA releases sequences of 2 to 3 nucleotides. This Francisella philomiragia subsp. philomiragia (strain ATCC 25017 / CCUG 19701 / FSC 153 / O#319-036) protein is Transcription elongation factor GreA.